Here is a 951-residue protein sequence, read N- to C-terminus: Cadmium/zinc-transporting ATPase HMA2 (951 aa).

Residues 1-83 (MASKKMTKSY…VRVTGETNFK (83 aa)) lie on the Cytoplasmic side of the membrane. Residues 7–73 (TKSYFDVLGI…ALNQAQLEAN (67 aa)) form the HMA domain. Residues 84–105 (NKWPSPFAVVSGILLLLSFFKY) form a helical membrane-spanning segment. Over 106 to 108 (LYS) the chain is Extracellular. A helical membrane pass occupies residues 109 to 128 (PFRWLAVAAVVAGIYPILAK). Over 129–135 (AVASLAR) the chain is Cytoplasmic. Residues 136–156 (FRIDINILVVVTVGATIGMQD) form a helical membrane-spanning segment. A topological domain (extracellular) is located at residue Tyr157. A helical transmembrane segment spans residues 158–178 (TEAAVVVFLFTIAEWLQSRAS). The Cytoplasmic segment spans residues 179–304 (YKASAVMQSL…KTETQRFIDK (126 aa)). A helical transmembrane segment spans residues 305 to 327 (CSKYYTPAIILISICFVAIPFAL). Topologically, residues 328–335 (KVHNLKHW) are extracellular. A helical transmembrane segment spans residues 336–353 (VHLALVVLVSACPCGLIL). Residues 354–647 (STPVATFCAL…KLAKRAKRKV (294 aa)) lie on the Cytoplasmic side of the membrane. Asp391 functions as the 4-aspartylphosphate intermediate in the catalytic mechanism. Mg(2+) contacts are provided by Asp592 and Asp596. Residues 648–667 (VENVVISITMKGAILALAFA) traverse the membrane as a helical segment. Topologically, residues 668 to 671 (GHPL) are extracellular. The helical transmembrane segment at 672-691 (IWAAVLADVGTCLLVILNSM) threads the bilayer. The Cytoplasmic portion of the chain corresponds to 692–951 (LLLSDKHKTG…VGTLKEIVIE (260 aa)). Basic and acidic residues predominate over residues 841-851 (ELQQSCHDKPS). The interval 841-866 (ELQQSCHDKPSGLDIGTGPKHEGSST) is disordered.

The protein belongs to the cation transport ATPase (P-type) (TC 3.A.3) family. Type IB subfamily. Predominantly expressed in the vascular tissues of roots, stems, and leaves. Also detected in developing anthers.

It is found in the cell membrane. The enzyme catalyses Zn(2+)(in) + ATP + H2O = Zn(2+)(out) + ADP + phosphate + H(+). It carries out the reaction Cd(2+)(in) + ATP + H2O = Cd(2+)(out) + ADP + phosphate + H(+). Functionally, plays an important role in zinc transport and homeostasis. Could also be involved in cadmium detoxification. The polypeptide is Cadmium/zinc-transporting ATPase HMA2 (HMA2) (Arabidopsis thaliana (Mouse-ear cress)).